The sequence spans 564 residues: MQITNKIHFRNLQGDLFGGVTAAVIALPMALAFGIASGAGATAGLWGAVIVGFFAALFGGTPTLISEPTGPMTVVQTAVIASLVAADPDNGLAMAFTVVMMAGLFQIAFGLLKLGKYVTMMPYTVISGFMSGIGIILVILQLAPFLGQASPKGGVIGTLQALPNLVSNVRPVETLLALMTVGIIWFMPSRWKKFAPPQLVALVLGTIISITLFGDLDIRRIGEIQAGLPALQLPVFQADQLQRMLIDAAVLGMLGCIDALLTSVVADSLTRTEHNSNKELVGQGIGNVMSGLFGGLGGAGATMGTVVNIQSGGRTALSGLIRAMVLLVVILGAAKLAATIPLAVLAGIAFKVGVDIIDWGFLKRAHHVSIKGALIMYAVIVLTVLVDLIAAVGIGVFIANILTIDRMSALQSKAVKSISDADDEILLSANEKRWLDEGNGRVLLFQLSGPMIFGVAKAIAREHNAIQECAAIVFDLSDVPHLGVTASLALENAIEEAAEKGRAVYIVGATGQTKRRLEKLQVFRFVPESNCYDDRSEALKDAVLALGPHESEDSPSSSSVQTTY.

Topologically, residues 1–11 are cytoplasmic; sequence MQITNKIHFRN. A helical membrane pass occupies residues 12–37; sequence LQGDLFGGVTAAVIALPMALAFGIAS. Topologically, residues 38-40 are periplasmic; that stretch reads GAG. A helical membrane pass occupies residues 41–58; sequence ATAGLWGAVIVGFFAALF. The Cytoplasmic portion of the chain corresponds to 59 to 70; the sequence is GGTPTLISEPTG. Position 69 (Thr69) interacts with hydrogencarbonate. A helical membrane pass occupies residues 71 to 86; sequence PMTVVQTAVIASLVAA. Residues 87 to 90 lie on the Periplasmic side of the membrane; that stretch reads DPDN. Residues 91–112 form a helical membrane-spanning segment; the sequence is GLAMAFTVVMMAGLFQIAFGLL. The Cytoplasmic segment spans residues 113–122; sequence KLGKYVTMMP. Residues 123–145 form a helical membrane-spanning segment; it reads YTVISGFMSGIGIILVILQLAPF. Topologically, residues 146 to 170 are periplasmic; it reads LGQASPKGGVIGTLQALPNLVSNVR. The helical transmembrane segment at 171 to 185 threads the bilayer; sequence PVETLLALMTVGIIW. Residues 186 to 196 are Cytoplasmic-facing; it reads FMPSRWKKFAP. The helical transmembrane segment at 197 to 211 threads the bilayer; the sequence is PQLVALVLGTIISIT. The Periplasmic segment spans residues 212-240; sequence LFGDLDIRRIGEIQAGLPALQLPVFQADQ. Residues 241–269 form a helical membrane-spanning segment; that stretch reads LQRMLIDAAVLGMLGCIDALLTSVVADSL. The Na(+) site is built by Asp258 and Thr262. Residues 270-275 are Cytoplasmic-facing; sequence TRTEHN. The helical transmembrane segment at 276 to 292 threads the bilayer; sequence SNKELVGQGIGNVMSGL. The Periplasmic segment spans residues 293–302; the sequence is FGGLGGAGAT. Gly300 is a binding site for Na(+). Ala301 contacts hydrogencarbonate. Residue Thr302 coordinates Na(+). A helical membrane pass occupies residues 303–312; sequence MGTVVNIQSG. The Cytoplasmic segment spans residues 313-315; sequence GRT. A helical transmembrane segment spans residues 316-338; the sequence is ALSGLIRAMVLLVVILGAAKLAA. Residues 339–341 are Periplasmic-facing; it reads TIP. A helical membrane pass occupies residues 342 to 357; that stretch reads LAVLAGIAFKVGVDII. Residues 358–369 lie on the Cytoplasmic side of the membrane; that stretch reads DWGFLKRAHHVS. The chain crosses the membrane as a helical span at residues 370–390; that stretch reads IKGALIMYAVIVLTVLVDLIA. Residues 391 to 392 are Periplasmic-facing; sequence AV. A helical transmembrane segment spans residues 393-405; that stretch reads GIGVFIANILTID. The Cytoplasmic portion of the chain corresponds to 406–564; sequence RMSALQSKAV…PSSSSVQTTY (159 aa). One can recognise an STAS domain in the interval 432–542; sequence KRWLDEGNGR…DDRSEALKDA (111 aa).

This sequence belongs to the SLC26A/SulP transporter (TC 2.A.53) family. In terms of assembly, forms homodimers through the STAS cytoplasmic domain.

It localises to the cell inner membrane. Functionally, low affinity, high-flux Na(+)-dependent bicarbonate transporter. Involved in carbone dioxide-concentrating mechanisms (CCMs) that accumulate CO(2) and improve photosynthetic carbon fixation. The polypeptide is Bicarbonate transporter BicA (Synechocystis sp. (strain ATCC 27184 / PCC 6803 / Kazusa)).